A 525-amino-acid chain; its full sequence is GMP synthase [glutamine-hydrolyzing] (525 aa).

The Glutamine amidotransferase type-1 domain maps to 9 to 207; that stretch reads RILILDFGSQ…VVDICKCEKL (199 aa). The Nucleophile role is filled by Cys86. Residues His181 and Glu183 contribute to the active site. The region spanning 208–400 is the GMPS ATP-PPase domain; the sequence is WTSASIIDDA…LGLPYDMLYR (193 aa). An ATP-binding site is contributed by 235–241; that stretch reads SGGVDSS.

In terms of assembly, homodimer.

It catalyses the reaction XMP + L-glutamine + ATP + H2O = GMP + L-glutamate + AMP + diphosphate + 2 H(+). It functions in the pathway purine metabolism; GMP biosynthesis; GMP from XMP (L-Gln route): step 1/1. Its function is as follows. Catalyzes the synthesis of GMP from XMP. This Colwellia psychrerythraea (strain 34H / ATCC BAA-681) (Vibrio psychroerythus) protein is GMP synthase [glutamine-hydrolyzing].